The following is a 126-amino-acid chain: Probable 4-amino-4-deoxy-L-arabinose-phosphoundecaprenol flippase subunit ArnF (126 aa).

Residues methionine 1–arginine 21 traverse the membrane as a helical segment. Residues serine 22 to threonine 47 lie on the Periplasmic side of the membrane. A helical transmembrane segment spans residues phenylalanine 48–leucine 68. Residues histidine 69–alanine 76 are Cytoplasmic-facing. A helical transmembrane segment spans residues tyrosine 77–tryptophan 97. The Periplasmic segment spans residues histidine 98–proline 100. The chain crosses the membrane as a helical span at residues phenylalanine 101–tryptophan 121. Residues proline 122–arginine 126 lie on the Cytoplasmic side of the membrane.

It belongs to the ArnF family. In terms of assembly, heterodimer of ArnE and ArnF.

Its subcellular location is the cell inner membrane. It functions in the pathway bacterial outer membrane biogenesis; lipopolysaccharide biosynthesis. In terms of biological role, translocates 4-amino-4-deoxy-L-arabinose-phosphoundecaprenol (alpha-L-Ara4N-phosphoundecaprenol) from the cytoplasmic to the periplasmic side of the inner membrane. This is Probable 4-amino-4-deoxy-L-arabinose-phosphoundecaprenol flippase subunit ArnF from Klebsiella pneumoniae subsp. pneumoniae (strain ATCC 700721 / MGH 78578).